We begin with the raw amino-acid sequence, 392 residues long: Succinate--CoA ligase [ADP-forming] subunit beta (392 aa).

Positions 9-236 (RDLFERHGLP…QAAVDPLEQA (228 aa)) constitute an ATP-grasp domain. ATP is bound by residues Lys-45, 52 to 54 (GRG), Ala-94, and Glu-99. Positions 191 and 205 each coordinate Mg(2+). Substrate contacts are provided by residues Asn-256 and 318 to 320 (GIT).

The protein belongs to the succinate/malate CoA ligase beta subunit family. Heterotetramer of two alpha and two beta subunits. It depends on Mg(2+) as a cofactor.

The catalysed reaction is succinate + ATP + CoA = succinyl-CoA + ADP + phosphate. It carries out the reaction GTP + succinate + CoA = succinyl-CoA + GDP + phosphate. It participates in carbohydrate metabolism; tricarboxylic acid cycle; succinate from succinyl-CoA (ligase route): step 1/1. Succinyl-CoA synthetase functions in the citric acid cycle (TCA), coupling the hydrolysis of succinyl-CoA to the synthesis of either ATP or GTP and thus represents the only step of substrate-level phosphorylation in the TCA. The beta subunit provides nucleotide specificity of the enzyme and binds the substrate succinate, while the binding sites for coenzyme A and phosphate are found in the alpha subunit. This Salinispora tropica (strain ATCC BAA-916 / DSM 44818 / JCM 13857 / NBRC 105044 / CNB-440) protein is Succinate--CoA ligase [ADP-forming] subunit beta.